A 202-amino-acid chain; its full sequence is Small ribosomal subunit protein uS4c (202 aa).

The S4 RNA-binding domain occupies Met90–Asn154.

This sequence belongs to the universal ribosomal protein uS4 family. As to quaternary structure, part of the 30S ribosomal subunit. Contacts protein S5. The interaction surface between S4 and S5 is involved in control of translational fidelity.

It localises to the plastid. It is found in the chloroplast. Functionally, one of the primary rRNA binding proteins, it binds directly to 16S rRNA where it nucleates assembly of the body of the 30S subunit. With S5 and S12 plays an important role in translational accuracy. The sequence is that of Small ribosomal subunit protein uS4c (rps4) from Marchantia polymorpha (Common liverwort).